Here is a 148-residue protein sequence, read N- to C-terminus: UPF0260 protein Maqu_1608 (148 aa).

It belongs to the UPF0260 family.

The sequence is that of UPF0260 protein Maqu_1608 from Marinobacter nauticus (strain ATCC 700491 / DSM 11845 / VT8) (Marinobacter aquaeolei).